The sequence spans 311 residues: Malate dehydrogenase (311 aa).

Residues 7-13 (GAAGGIG) and D34 each bind NAD(+). Substrate is bound by residues R81 and R87. Residues N94 and 117–119 (ITN) each bind NAD(+). Substrate is bound by residues N119 and R153. The Proton acceptor role is filled by H177. NAD(+) is bound at residue M227.

The protein belongs to the LDH/MDH superfamily. MDH type 1 family. Homodimer.

It catalyses the reaction (S)-malate + NAD(+) = oxaloacetate + NADH + H(+). Functionally, catalyzes the reversible oxidation of malate to oxaloacetate. The protein is Malate dehydrogenase of Shewanella pealeana (strain ATCC 700345 / ANG-SQ1).